The sequence spans 247 residues: Protein SODIUM POTASSIUM ROOT DEFECTIVE 3 (247 aa).

The segment at 130 to 166 (GSTGQDTVATEESEASAPKRGSSGPVEEKKKSSGSGS) is disordered. One can recognise an HMA domain in the interval 167 to 235 (DQVVVLRVSL…KVKNAQFWTP (69 aa)). 2 residues coordinate a metal cation: cysteine 180 and cysteine 183.

The protein localises to the cytoplasm. Heavy metal-associated protein involved in salt tolerance. The sequence is that of Protein SODIUM POTASSIUM ROOT DEFECTIVE 3 from Arabidopsis thaliana (Mouse-ear cress).